Reading from the N-terminus, the 425-residue chain is Histidine--tRNA ligase (425 aa).

The protein belongs to the class-II aminoacyl-tRNA synthetase family. As to quaternary structure, homodimer.

It localises to the cytoplasm. The catalysed reaction is tRNA(His) + L-histidine + ATP = L-histidyl-tRNA(His) + AMP + diphosphate + H(+). The chain is Histidine--tRNA ligase from Shewanella oneidensis (strain ATCC 700550 / JCM 31522 / CIP 106686 / LMG 19005 / NCIMB 14063 / MR-1).